The primary structure comprises 277 residues: Bifunctional protein FolD (277 aa).

Residues 156 to 158 (GRS), serine 183, and isoleucine 224 contribute to the NADP(+) site.

The protein belongs to the tetrahydrofolate dehydrogenase/cyclohydrolase family. As to quaternary structure, homodimer.

The enzyme catalyses (6R)-5,10-methylene-5,6,7,8-tetrahydrofolate + NADP(+) = (6R)-5,10-methenyltetrahydrofolate + NADPH. The catalysed reaction is (6R)-5,10-methenyltetrahydrofolate + H2O = (6R)-10-formyltetrahydrofolate + H(+). It functions in the pathway one-carbon metabolism; tetrahydrofolate interconversion. Its function is as follows. Catalyzes the oxidation of 5,10-methylenetetrahydrofolate to 5,10-methenyltetrahydrofolate and then the hydrolysis of 5,10-methenyltetrahydrofolate to 10-formyltetrahydrofolate. This Kosmotoga olearia (strain ATCC BAA-1733 / DSM 21960 / TBF 19.5.1) protein is Bifunctional protein FolD.